The primary structure comprises 354 residues: MKEQIQQLSAYQPGLSPRALKKEFGLDIDLHKLASNENLYGPSPKAKEAIKEHVDEVLYYPETGAPTLRKKIADTLNIDENRILFGAGLDEVILMISRAVLTPGDKIVTSQATFGQYYHNAIVESAEVVQVPLKENGQFDLDGILNEIDEDTALVWICNPNNPTGTYVTHEELEAFLEKVPSNVPVLVDEAYFEFVTADDFPDTLKLQEKFPNAFLMRTFSKAYGLAGLRVGYVIATKEAIHNYNIIRPPFNVGRLSEYAAVAAFEDQDYLKEIQKRNAEERAKFFEIPESKHFFDSQTNFIFVNTKRPKELYEALLKVGCITREFPIGVRITIGFPEQNDKMIEVLKNFDFEA.

Lys-222 is modified (N6-(pyridoxal phosphate)lysine).

Belongs to the class-II pyridoxal-phosphate-dependent aminotransferase family. Histidinol-phosphate aminotransferase subfamily. In terms of assembly, homodimer. Pyridoxal 5'-phosphate serves as cofactor.

It catalyses the reaction L-histidinol phosphate + 2-oxoglutarate = 3-(imidazol-4-yl)-2-oxopropyl phosphate + L-glutamate. It participates in amino-acid biosynthesis; L-histidine biosynthesis; L-histidine from 5-phospho-alpha-D-ribose 1-diphosphate: step 7/9. The chain is Histidinol-phosphate aminotransferase from Staphylococcus carnosus (strain TM300).